The chain runs to 322 residues: tRNA U34 carboxymethyltransferase (322 aa).

Residues Lys-92, Trp-106, Lys-111, Gly-131, 153 to 155, 181 to 182, Met-196, Tyr-200, and Arg-315 each bind carboxy-S-adenosyl-L-methionine; these read DPS and VE.

The protein belongs to the class I-like SAM-binding methyltransferase superfamily. CmoB family. Homotetramer.

It carries out the reaction carboxy-S-adenosyl-L-methionine + 5-hydroxyuridine(34) in tRNA = 5-carboxymethoxyuridine(34) in tRNA + S-adenosyl-L-homocysteine + H(+). Its function is as follows. Catalyzes carboxymethyl transfer from carboxy-S-adenosyl-L-methionine (Cx-SAM) to 5-hydroxyuridine (ho5U) to form 5-carboxymethoxyuridine (cmo5U) at position 34 in tRNAs. The protein is tRNA U34 carboxymethyltransferase of Pseudoalteromonas translucida (strain TAC 125).